A 285-amino-acid chain; its full sequence is NAD kinase (285 aa).

The active-site Proton acceptor is D76. Residues 76–77 (DG), 151–152 (NE), H162, R179, D181, 192–197 (TAYSLS), and Q252 contribute to the NAD(+) site.

The protein belongs to the NAD kinase family. The cofactor is a divalent metal cation.

The protein localises to the cytoplasm. It catalyses the reaction NAD(+) + ATP = ADP + NADP(+) + H(+). Involved in the regulation of the intracellular balance of NAD and NADP, and is a key enzyme in the biosynthesis of NADP. Catalyzes specifically the phosphorylation on 2'-hydroxyl of the adenosine moiety of NAD to yield NADP. The protein is NAD kinase of Haemophilus influenzae (strain ATCC 51907 / DSM 11121 / KW20 / Rd).